The primary structure comprises 733 residues: Non-secreted LysM effector LCP1 (733 aa).

The signal sequence occupies residues 1–22 (MMRRPWLLSALVAWVKLPSVQG). 2 consecutive LysM domains span residues 211 to 256 (SEYT…KLCI) and 261 to 309 (DVYV…TICI). N-linked (GlcNAc...) asparagine glycosylation is found at asparagine 298, asparagine 304, asparagine 340, asparagine 350, asparagine 381, asparagine 432, asparagine 442, asparagine 455, and asparagine 538. Residues 347–393 (LFHNVTAGDDCGTIGLKYSISLDDFIFLNSMIWPNCTNLWLRASYCV) enclose the LysM 3 domain. Low complexity predominate over residues 605–629 (SPITSSAPTSTTASSKTSSSAAQPT). Residues 605–637 (SPITSSAPTSTTASSKTSSSAAQPTNVSTDGTC) are disordered. N-linked (GlcNAc...) asparagine glycosylation occurs at asparagine 630. Chitin-binding type-1 domains are found at residues 634–680 (DGTC…KCDA) and 688–733 (DGTC…GVCT). Cystine bridges form between cysteine 637-cysteine 654, cysteine 645-cysteine 660, cysteine 653-cysteine 667, cysteine 671-cysteine 678, cysteine 691-cysteine 708, cysteine 699-cysteine 714, cysteine 707-cysteine 721, and cysteine 725-cysteine 732.

It belongs to the secreted LysM effector family.

It localises to the secreted. It is found in the cell membrane. The protein localises to the vacuole. Secreted effector that enables the plant pathogenic fungus to manipulate host defenses for successful infection. Not involved in host recognition and penetration but suppresses host cell death and promotes fumonisin biosynthesis while the pathogen colonizes maize kernels. In Gibberella moniliformis (strain M3125 / FGSC 7600) (Maize ear and stalk rot fungus), this protein is Non-secreted LysM effector LCP1.